Reading from the N-terminus, the 695-residue chain is Elongation factor G 1 (695 aa).

In terms of domain architecture, tr-type G spans 6–282 (STFRNIGISA…AITYYLPDPT (277 aa)). Residues 15–22 (AHIDSGKT), 82–86 (DTPGH), and 136–139 (NKCD) contribute to the GTP site.

This sequence belongs to the TRAFAC class translation factor GTPase superfamily. Classic translation factor GTPase family. EF-G/EF-2 subfamily.

Its subcellular location is the cytoplasm. Its function is as follows. Catalyzes the GTP-dependent ribosomal translocation step during translation elongation. During this step, the ribosome changes from the pre-translocational (PRE) to the post-translocational (POST) state as the newly formed A-site-bound peptidyl-tRNA and P-site-bound deacylated tRNA move to the P and E sites, respectively. Catalyzes the coordinated movement of the two tRNA molecules, the mRNA and conformational changes in the ribosome. This Treponema pallidum (strain Nichols) protein is Elongation factor G 1 (fusA).